A 380-amino-acid polypeptide reads, in one-letter code: Tryptophan 2,3-dioxygenase (380 aa).

Substrate-binding positions include 57 to 61 and R128; that span reads FIITH. H313 lines the heme pocket. T328 contributes to the substrate binding site.

It belongs to the tryptophan 2,3-dioxygenase family. In terms of assembly, homotetramer. Dimer of dimers. Heme is required as a cofactor.

It catalyses the reaction L-tryptophan + O2 = N-formyl-L-kynurenine. It participates in amino-acid degradation; L-tryptophan degradation via kynurenine pathway; L-kynurenine from L-tryptophan: step 1/2. Its pathway is pigment biosynthesis; ommochrome biosynthesis. Functionally, heme-dependent dioxygenase that catalyzes the oxidative cleavage of the L-tryptophan (L-Trp) pyrrole ring and converts L-tryptophan to N-formyl-L-kynurenine. Catalyzes the oxidative cleavage of the indole moiety. This Drosophila mojavensis (Fruit fly) protein is Tryptophan 2,3-dioxygenase.